The primary structure comprises 129 residues: Replication initiation control protein YabA (129 aa).

His-103, Cys-105, Cys-119, and Cys-122 together coordinate Zn(2+).

This sequence belongs to the YabA family. In terms of assembly, homotetramer. Interacts with both DnaA and DnaN, acting as a bridge between these two proteins. It depends on Zn(2+) as a cofactor.

The protein resides in the cytoplasm. It is found in the nucleoid. Functionally, involved in control of chromosome replication initiation. Inhibits the cooperative binding of DnaA to the oriC region, thus negatively regulating initiation of chromosome replication. Inhibits the ability of DnaA-ATP to form a helix on DNA; does not disassemble preformed DnaA-DNA helices. Decreases the residence time of DnaA on the chromosome at its binding sites (oriC, replication forks and promoter-binding sites). Tethers DnaA to the replication machinery via the DNA polymerase beta sliding clamp subunit (dnaN). Associates with oriC and other DnaA targets on the chromosome in a DnaA-dependent manner. The protein is Replication initiation control protein YabA of Listeria welshimeri serovar 6b (strain ATCC 35897 / DSM 20650 / CCUG 15529 / CIP 8149 / NCTC 11857 / SLCC 5334 / V8).